The following is a 217-amino-acid chain: Adenylate kinase (217 aa).

Position 10 to 15 (10 to 15 (GAGKGT)) interacts with ATP. The NMP stretch occupies residues 30-59 (STGDMLRAAVKAGTPLGLEAKKVMDSGGLV). AMP contacts are provided by residues Thr-31, Arg-36, 57–59 (GLV), 85–88 (GFPR), and Gln-92. The segment at 122–159 (GRRVHVASGRTYHVKFNPPKVAGVDDVTGEPLIQRDDD) is LID. ATP-binding positions include Arg-123 and 132–133 (TY). AMP is bound by residues Arg-156 and Arg-167. ATP is bound at residue Gly-203.

It belongs to the adenylate kinase family. As to quaternary structure, monomer.

Its subcellular location is the cytoplasm. The enzyme catalyses AMP + ATP = 2 ADP. Its pathway is purine metabolism; AMP biosynthesis via salvage pathway; AMP from ADP: step 1/1. Functionally, catalyzes the reversible transfer of the terminal phosphate group between ATP and AMP. Plays an important role in cellular energy homeostasis and in adenine nucleotide metabolism. The chain is Adenylate kinase from Methylibium petroleiphilum (strain ATCC BAA-1232 / LMG 22953 / PM1).